The chain runs to 193 residues: MWLIAGLGNPGLQYQNNRHNIGFMAIDAIYQSFSFSPWSKKFQAEISTGLINGKKTFLLKPQTFMNLSGQAIGEALRFYKLDLKNFIVIYDELDLPPGRVRVKIGGGNNGHNGIKSIDAHCGTDYCRIRLGIGRPNSKELVYQHVLGNFTKSDQEWLPSLLEAIAKNIALLIKGNKCLFMNEISQAMKNKNLQ.

Residue Y14 coordinates tRNA. Residue H19 is the Proton acceptor of the active site. 3 residues coordinate tRNA: F64, N66, and N112.

The protein belongs to the PTH family. In terms of assembly, monomer.

It localises to the cytoplasm. It carries out the reaction an N-acyl-L-alpha-aminoacyl-tRNA + H2O = an N-acyl-L-amino acid + a tRNA + H(+). Functionally, hydrolyzes ribosome-free peptidyl-tRNAs (with 1 or more amino acids incorporated), which drop off the ribosome during protein synthesis, or as a result of ribosome stalling. Its function is as follows. Catalyzes the release of premature peptidyl moieties from peptidyl-tRNA molecules trapped in stalled 50S ribosomal subunits, and thus maintains levels of free tRNAs and 50S ribosomes. This is Peptidyl-tRNA hydrolase from Bartonella henselae (strain ATCC 49882 / DSM 28221 / CCUG 30454 / Houston 1) (Rochalimaea henselae).